A 617-amino-acid chain; its full sequence is Urocanate reductase (617 aa).

Thr70 carries the post-translational modification FMN phosphoryl threonine. FAD contacts are provided by Ala124, Glu143, Asn151, Thr152, Gly156, Gly157, and Asp387. Arg446 serves as the catalytic Proton donor. FAD is bound by residues His553, Glu582, and Leu598.

Belongs to the FAD-dependent oxidoreductase 2 family. FRD/SDH subfamily. It depends on FAD as a cofactor. Requires FMN as cofactor.

The catalysed reaction is dihydrourocanate + A = urocanate + AH2. Catalyzes the two-electron reduction of urocanate to dihydrourocanate (also named imidazole propionate or deamino-histidine). Dihydrourocanate is present at higher concentrations in subjects with type 2 diabetes, and directly impairs glucose tolerance and insulin signaling at the level of insulin receptor substrate (IRS) through activation of p38 gamma (MAPK12)-p62-mTORC1. Therefore, the UrdA enzyme from the gut bacteria L.fermentum strain NBRC 3956 may contribute to the pathogenesis of type 2 diabetes by producing the microbial metabolite dihydrourocanate. This is Urocanate reductase from Limosilactobacillus fermentum (strain NBRC 3956 / LMG 18251) (Lactobacillus fermentum).